We begin with the raw amino-acid sequence, 124 residues long: uncharacterized protein (124 aa).

As to quaternary structure, interacts with dil1.

This is an uncharacterized protein from Schizosaccharomyces pombe (strain 972 / ATCC 24843) (Fission yeast).